A 303-amino-acid chain; its full sequence is UPF0282 protein MM_2966 (303 aa).

Belongs to the UPF0282 family.

This is UPF0282 protein MM_2966 from Methanosarcina mazei (strain ATCC BAA-159 / DSM 3647 / Goe1 / Go1 / JCM 11833 / OCM 88) (Methanosarcina frisia).